The primary structure comprises 402 residues: tRNA(Met) cytidine acetate ligase (402 aa).

Residues 7 to 20 (ITEYNPFHLGHELH), Gly-102, Asn-171, and Arg-196 contribute to the ATP site.

It belongs to the TmcAL family.

The protein localises to the cytoplasm. It carries out the reaction cytidine(34) in elongator tRNA(Met) + acetate + ATP = N(4)-acetylcytidine(34) in elongator tRNA(Met) + AMP + diphosphate. Functionally, catalyzes the formation of N(4)-acetylcytidine (ac(4)C) at the wobble position of elongator tRNA(Met), using acetate and ATP as substrates. First activates an acetate ion to form acetyladenylate (Ac-AMP) and then transfers the acetyl group to tRNA to form ac(4)C34. In Clostridium perfringens (strain SM101 / Type A), this protein is tRNA(Met) cytidine acetate ligase.